The primary structure comprises 469 residues: Aryl-phospho-beta-D-glucosidase BglH (469 aa).

Glutamate 175 acts as the Proton donor in catalysis. Glutamate 368 serves as the catalytic Nucleophile.

It belongs to the glycosyl hydrolase 1 family.

The catalysed reaction is 6-phospho-beta-D-glucosyl-(1-&gt;4)-D-glucose + H2O = D-glucose 6-phosphate + D-glucose. In terms of biological role, catalyzes the hydrolysis of aryl-phospho-beta-D-glucosides such as 4-methylumbelliferyl-phospho-beta-D-glucopyranoside (MUG-P), phosphoarbutin and phosphosalicin. Plays a major role in the utilization of arbutin or salicin as the sole carbon source. BglA and BglH are the major proteins contributing to hydrolysis of MUG-P by extracts of late-exponential-phase or stationary-phase B.subtilis cells. In Bacillus subtilis (strain 168), this protein is Aryl-phospho-beta-D-glucosidase BglH (bglH).